The chain runs to 452 residues: Ribulose bisphosphate carboxylase large chain (452 aa).

The propeptide occupies 1–2 (MS). N-acetylproline is present on Pro-3. Residue Lys-14 is modified to N6,N6,N6-trimethyllysine. Positions 123 and 173 each coordinate substrate. The active-site Proton acceptor is the Lys-175. Lys-177 provides a ligand contact to substrate. 3 residues coordinate Mg(2+): Lys-201, Asp-203, and Glu-204. Lys-201 bears the N6-carboxylysine mark. His-294 serves as the catalytic Proton acceptor. 3 residues coordinate substrate: Arg-295, Xaa-327, and Ser-379.

It belongs to the RuBisCO large chain family. Type I subfamily. As to quaternary structure, heterohexadecamer of 8 large chains and 8 small chains; disulfide-linked. The disulfide link is formed within the large subunit homodimers. Mg(2+) is required as a cofactor. Post-translationally, the disulfide bond which can form in the large chain dimeric partners within the hexadecamer appears to be associated with oxidative stress and protein turnover.

The protein resides in the plastid. It localises to the chloroplast. It catalyses the reaction 2 (2R)-3-phosphoglycerate + 2 H(+) = D-ribulose 1,5-bisphosphate + CO2 + H2O. It carries out the reaction D-ribulose 1,5-bisphosphate + O2 = 2-phosphoglycolate + (2R)-3-phosphoglycerate + 2 H(+). Functionally, ruBisCO catalyzes two reactions: the carboxylation of D-ribulose 1,5-bisphosphate, the primary event in carbon dioxide fixation, as well as the oxidative fragmentation of the pentose substrate in the photorespiration process. Both reactions occur simultaneously and in competition at the same active site. This is Ribulose bisphosphate carboxylase large chain from Salvadora persica (Toothbrush tree).